The primary structure comprises 131 residues: Profilin-2 (131 aa).

Belongs to the profilin family. In terms of assembly, occurs in many kinds of cells as a complex with monomeric actin in a 1:1 ratio.

The protein resides in the cytoplasm. The protein localises to the cytoskeleton. Functionally, binds to actin and affects the structure of the cytoskeleton. At high concentrations, profilin prevents the polymerization of actin, whereas it enhances it at low concentrations. By binding to PIP2, it inhibits the formation of IP3 and DG. In Solanum lycopersicum (Tomato), this protein is Profilin-2.